A 111-amino-acid polypeptide reads, in one-letter code: MISTIALFWALCVVCVVNMARYFSSLRALLVVLRGCDPLLYQYVDGGGFFTSHGQPSKQMRLVWYIYAQRYRDHHDDEFIRRCERVRRQFILTSALCGLVVVSLIALMIWH.

Transmembrane regions (helical) follow at residues 1–21 (MIST…NMAR) and 90–110 (FILT…LMIW).

This sequence belongs to the universal stress protein B family.

It localises to the cell inner membrane. The sequence is that of Universal stress protein B from Klebsiella pneumoniae (strain 342).